The primary structure comprises 933 residues: Neuronal PAS domain-containing protein 4A (933 aa).

The segment at Met-1–Arg-13 is basic motif; degenerate. One can recognise a bHLH domain in the interval Met-1–Ser-53. The tract at residues Asp-14–Ser-53 is helix-loop-helix motif. PAS domains lie at Ser-74–Asp-148 and Thr-220–Gly-290. Residues Ala-295–Thr-334 enclose the PAC domain. Over residues Gln-361 to Cys-398 the composition is skewed to polar residues. Disordered stretches follow at residues Gln-361 to Pro-451, Gly-514 to Leu-573, and Asp-750 to Pro-776. 4 stretches are compositionally biased toward low complexity: residues Ser-399–Ser-411, Glu-440–Pro-451, Gly-538–Gln-560, and Leu-751–Pro-769.

Efficient DNA binding requires dimerization with another bHLH protein. In terms of tissue distribution, brain-specific.

Its subcellular location is the nucleus. In terms of biological role, transcription factor expressed in neurons of the brain that regulates the excitatory-inhibitory balance within neural circuits and is required for contextual memory in the hippocampus. Plays a key role in the structural and functional plasticity of neurons. Acts as an early-response transcription factor in both excitatory and inhibitory neurons, where it induces distinct but overlapping sets of late-response genes in these two types of neurons, allowing the synapses that form on inhibitory and excitatory neurons to be modified by neuronal activity in a manner specific to their function within a circuit, thereby facilitating appropriate circuit responses to sensory experience. This is Neuronal PAS domain-containing protein 4A (npas4a) from Danio rerio (Zebrafish).